The following is a 420-amino-acid chain: Sodium/proton antiporter 2 (420 aa).

11 consecutive transmembrane segments (helical) span residues isoleucine 25–isoleucine 45, isoleucine 60–phenylalanine 80, isoleucine 94–threonine 114, leucine 136–valine 156, isoleucine 173–leucine 193, leucine 221–glycine 241, leucine 242–isoleucine 262, glycine 285–leucine 305, leucine 321–alanine 341, phenylalanine 363–methionine 383, and phenylalanine 400–leucine 420.

It belongs to the NhaD Na(+)/H(+) (TC 2.A.62) antiporter family.

The protein resides in the membrane. Functionally, na(+)/H(+) antiporter that extrudes sodium in exchange for external protons. This chain is Sodium/proton antiporter 2, found in Arabidopsis thaliana (Mouse-ear cress).